The chain runs to 261 residues: Short-chain dehydrogenase/reductase AFUA_1G00990 (261 aa).

6 residues coordinate NADP(+): L19, D67, N94, Y169, K173, and T213. Residue Y169 is the Proton donor of the active site. Residue K173 is the Lowers pKa of active site Tyr of the active site.

This sequence belongs to the short-chain dehydrogenases/reductases (SDR) family.

In terms of biological role, short-chain dehydrogenase/reductase; part of the gene cluster that mediates the biosynthesis of fumigermin that inhibits germination of spores of the inducing S.rapamycinicus, and thus helps the fungus to defend resources in the shared habitat against a bacterial competitor. The partially reducing polyketide synthase fngA alone is sufficient for the production of fumigermin. FgnA catalyzes the condensation of 3 malonyl-CoA units to an acetyl-CoA starter, and 3 methylations to yield fumigermin. It is remarkable that the five cluster genes including fgnA are conserved in distantly related fungi, supporting the assumption of a fumigermin cluster; it is thus possible that originally all five genes were functional, but that the genes encoding tailoring enzymes became inactive from mutations, similar to the case of the fgnA gene in strains A1163 and Af293. In Aspergillus fumigatus (strain ATCC MYA-4609 / CBS 101355 / FGSC A1100 / Af293) (Neosartorya fumigata), this protein is Short-chain dehydrogenase/reductase AFUA_1G00990.